Reading from the N-terminus, the 606-residue chain is Glutamine--fructose-6-phosphate aminotransferase [isomerizing] (606 aa).

C2 serves as the catalytic Nucleophile; for GATase activity. The Glutamine amidotransferase type-2 domain occupies 2–217; the sequence is CGIVGMVGEN…DGDVMVLRKD (216 aa). 2 consecutive SIS domains span residues 284 to 423 and 455 to 596; these read YEEL…INGY and LSEK…PDKP. K601 (for Fru-6P isomerization activity) is an active-site residue.

As to quaternary structure, homodimer.

It localises to the cytoplasm. It carries out the reaction D-fructose 6-phosphate + L-glutamine = D-glucosamine 6-phosphate + L-glutamate. In terms of biological role, catalyzes the first step in hexosamine metabolism, converting fructose-6P into glucosamine-6P using glutamine as a nitrogen source. This Thermotoga maritima (strain ATCC 43589 / DSM 3109 / JCM 10099 / NBRC 100826 / MSB8) protein is Glutamine--fructose-6-phosphate aminotransferase [isomerizing].